A 359-amino-acid chain; its full sequence is MTLESMMACCLSDEVKESKRINAEIEKQLRRDKRDARRELKLLLLGTGESGKSTFIKQMRIIHGAGYSEEDKRGFTKLVYQNIFTAMQAMIRAMETLKILYKYEQNKANALLIREVDVEKVTTFEHQYVSAIKTLWEDPGIQECYDRRREYQLSDSAKYYLTDVDRIATLGYLPTQQDVLRVRVPTTGIIEYPFDLENIIFRMVDVGGQRSERRKWIHCFENVTSIMFLVALSEYDQVLVESDNENRMEESKALFRTIITYPWFQNSSVILFLNKKDLLEDKILYSHLVDYFPEFDGPQRDAQAAREFILKMFVDLNPDSDKIIYSHFTCATDTENIRFVFAAVKDTILQLNLKEYNLV.

S-palmitoyl cysteine attachment occurs at residues C9 and C10. The G-alpha domain maps to 38-359; it reads RELKLLLLGT…QLNLKEYNLV (322 aa). The tract at residues 41 to 54 is G1 motif; it reads KLLLLGTGESGKST. Residues 46-53 and 180-183 each bind GTP; these read GTGESGKS and LRVR. Mg(2+) is bound at residue S53. The G2 motif stretch occupies residues 178-186; sequence DVLRVRVPT. T186 is a binding site for Mg(2+). The segment at 201–210 is G3 motif; sequence FRMVDVGGQR. Q209 is modified (deamidated glutamine; by Photorhabdus PAU_02230). Residues 270-277 are G4 motif; it reads ILFLNKKD. Residues 274-277 and A331 contribute to the GTP site; that span reads NKKD. A G5 motif region spans residues 329-334; it reads TCATDT.

Belongs to the G-alpha family. G(q) subfamily. As to quaternary structure, g proteins are composed of 3 units; alpha, beta and gamma. The alpha chain contains the guanine nucleotide binding site. Interacts with RGS22. Interacts with NTSR1. (Microbial infection) Interacts with human cytomegalovirus (HHV-5) US28. In terms of processing, (Microbial infection) Deamidated at Gln-209 by Photorhabdus asymbiotica toxin PAU_02230, blocking GTP hydrolysis of heterotrimeric GNAQ or GNA11 and G-alphai (GNAI1, GNAI2 or GNAI3) proteins, thereby activating RhoA. Expressed in testis.

The protein localises to the cell membrane. Its subcellular location is the cytoplasm. The catalysed reaction is GTP + H2O = GDP + phosphate + H(+). Guanine nucleotide-binding proteins (G proteins) function as transducers downstream of G protein-coupled receptors (GPCRs) in numerous signaling cascades. The alpha chain contains the guanine nucleotide binding site and alternates between an active, GTP-bound state and an inactive, GDP-bound state. Signaling by an activated GPCR promotes GDP release and GTP binding. The alpha subunit has a low GTPase activity that converts bound GTP to GDP, thereby terminating the signal. Both GDP release and GTP hydrolysis are modulated by numerous regulatory proteins. Signaling is mediated via phospholipase C-beta-dependent inositol lipid hydrolysis for signal propagation: activates phospholipase C-beta: following GPCR activation, GNA11 activates PLC-beta (PLCB1, PLCB2, PLCB3 or PLCB4), leading to production of diacylglycerol (DAG) and inositol 1,4,5-trisphosphate (IP3). Transduces FFAR4 signaling in response to long-chain fatty acids (LCFAs). Together with GNAQ, required for heart development. In the respiratory epithelium, transmits OXGR1-dependent signals that lead to downstream intracellular Ca(2+) release and mucocilliary clearance of airborne pathogens. The sequence is that of Guanine nucleotide-binding protein subunit alpha-11 (GNA11) from Homo sapiens (Human).